Reading from the N-terminus, the 259-residue chain is Snake venom serine protease homolog rhinocerase 2 (259 aa).

Residues 1–17 (VLIRVLANLLLLQLSYA) form the signal peptide. The propeptide occupies 18-23 (QESSEL). The Peptidase S1 domain maps to 24-250 (VIGGDECDIN…YTDWIEGIIA (227 aa)). 6 disulfides stabilise this stretch: C30–C164, C51–C67, C99–C257, C143–C211, C175–C190, and C201–C226. N-linked (GlcNAc...) asparagine glycosylation is present at N252.

Belongs to the peptidase S1 family. Snake venom subfamily. As to expression, expressed by the venom gland.

It is found in the secreted. Its function is as follows. Snake venom serine protease homolog that may act in the hemostasis system of the prey. The sequence is that of Snake venom serine protease homolog rhinocerase 2 from Bitis rhinoceros (West African gaboon viper).